The sequence spans 231 residues: Aquaporin Z (231 aa).

The next 2 helical transmembrane spans lie at 9–29 and 34–54; these read CFGT…AAGF and IGFA…AFAV. The NPA 1 motif lies at 63 to 65; it reads NPA. A run of 3 helical transmembrane segments spans residues 82–102, 129–149, and 156–176; these read VGYV…LYLI, YSML…LLVI, and FAPA…IHLI. Residues 186-188 carry the NPA 2 motif; it reads NPA. Residues 202–222 form a helical membrane-spanning segment; the sequence is LEQLWFFWVVPIVGGIIGGLI.

The protein belongs to the MIP/aquaporin (TC 1.A.8) family. As to quaternary structure, homotetramer.

It localises to the cell inner membrane. The enzyme catalyses H2O(in) = H2O(out). In terms of biological role, channel that permits osmotically driven movement of water in both directions. It is involved in the osmoregulation and in the maintenance of cell turgor during volume expansion in rapidly growing cells. It mediates rapid entry or exit of water in response to abrupt changes in osmolarity. This chain is Aquaporin Z, found in Escherichia coli O157:H7.